A 413-amino-acid chain; its full sequence is 1-deoxy-D-xylulose 5-phosphate reductoisomerase (413 aa).

Residues Thr13, Gly14, Ser15, Ile16, Lys40, Asn41, and Asn127 each coordinate NADPH. Position 128 (Lys128) interacts with 1-deoxy-D-xylulose 5-phosphate. Glu129 provides a ligand contact to NADPH. Asp153 is a binding site for Mn(2+). Positions 154, 155, 184, and 207 each coordinate 1-deoxy-D-xylulose 5-phosphate. Residue Glu155 coordinates Mn(2+). Gly213 is an NADPH binding site. 1-deoxy-D-xylulose 5-phosphate is bound by residues Ser220, Asn225, Lys226, and Glu229. Glu229 is a binding site for Mn(2+).

The protein belongs to the DXR family. It depends on Mg(2+) as a cofactor. Mn(2+) serves as cofactor.

The enzyme catalyses 2-C-methyl-D-erythritol 4-phosphate + NADP(+) = 1-deoxy-D-xylulose 5-phosphate + NADPH + H(+). It participates in isoprenoid biosynthesis; isopentenyl diphosphate biosynthesis via DXP pathway; isopentenyl diphosphate from 1-deoxy-D-xylulose 5-phosphate: step 1/6. Catalyzes the NADPH-dependent rearrangement and reduction of 1-deoxy-D-xylulose-5-phosphate (DXP) to 2-C-methyl-D-erythritol 4-phosphate (MEP). The sequence is that of 1-deoxy-D-xylulose 5-phosphate reductoisomerase from Nitrosomonas eutropha (strain DSM 101675 / C91 / Nm57).